Consider the following 329-residue polypeptide: MWKRNLLLLILLHIGAFLFPFLTVSKEKLTPERIAVALALLAVVLMSEALSIYLIFKRRGLRLREGLIWILELKEIEYAKLSEEERDLAVKFGYIIIGFPAAGLMLCGAVLEWGDLALAFKFPIIFFAFIVPLLQLCLFPLVVLFYTYNRFLKNDLAASANFSVFWAKLSIAGLVLVLLSLMLVKSEVLPFVKTITAHRTAFILAPLFNIFVGALQYLMAKTGSRELMVTFSIVLFASPLLSFALLLELLGAYSLQESLKFALIGVSVIFLAMFAATWVVLRLFGYSFDTLQRAVEEARVEGPILFWLFWVNAAIVGIGIFFVIRILTF.

Transmembrane regions (helical) follow at residues 5–24 (NLLL…FLTV), 34–56 (IAVA…YLIF), 92–114 (FGYI…LEWG), 124–146 (IIFF…VLFY), 159–181 (SANF…LLSL), 196–218 (TAHR…LQYL), 231–253 (FSIV…LGAY), 263–285 (LIGV…RLFG), and 306–328 (FWLF…RILT).

It localises to the cell membrane. This is an uncharacterized protein from Archaeoglobus fulgidus (strain ATCC 49558 / DSM 4304 / JCM 9628 / NBRC 100126 / VC-16).